The following is a 288-amino-acid chain: Acetyl-coenzyme A carboxylase carboxyl transferase subunit beta (288 aa).

A CoA carboxyltransferase N-terminal domain is found at 34-288; the sequence is LFAKCPACKH…HLVAFHGGGQ (255 aa). Cysteine 38, cysteine 41, cysteine 56, and cysteine 59 together coordinate Zn(2+). Residues 38 to 59 form a C4-type zinc finger; the sequence is CPACKHMIYKKDLGLAKICPTC.

This sequence belongs to the AccD/PCCB family. As to quaternary structure, acetyl-CoA carboxylase is a heterohexamer composed of biotin carboxyl carrier protein (AccB), biotin carboxylase (AccC) and two subunits each of ACCase subunit alpha (AccA) and ACCase subunit beta (AccD). Zn(2+) serves as cofactor.

It is found in the cytoplasm. It carries out the reaction N(6)-carboxybiotinyl-L-lysyl-[protein] + acetyl-CoA = N(6)-biotinyl-L-lysyl-[protein] + malonyl-CoA. The protein operates within lipid metabolism; malonyl-CoA biosynthesis; malonyl-CoA from acetyl-CoA: step 1/1. Functionally, component of the acetyl coenzyme A carboxylase (ACC) complex. Biotin carboxylase (BC) catalyzes the carboxylation of biotin on its carrier protein (BCCP) and then the CO(2) group is transferred by the transcarboxylase to acetyl-CoA to form malonyl-CoA. In Streptococcus pyogenes serotype M4 (strain MGAS10750), this protein is Acetyl-coenzyme A carboxylase carboxyl transferase subunit beta.